Reading from the N-terminus, the 426-residue chain is Chaperone SurA (426 aa).

The N-terminal stretch at 1–13 (MLGALFLSTAASA) is a signal peptide. PpiC domains follow at residues 164–265 (SEEL…KLLD) and 274–373 (RDEV…EVLG).

It is found in the periplasm. The enzyme catalyses [protein]-peptidylproline (omega=180) = [protein]-peptidylproline (omega=0). In terms of biological role, chaperone involved in the correct folding and assembly of outer membrane proteins. Recognizes specific patterns of aromatic residues and the orientation of their side chains, which are found more frequently in integral outer membrane proteins. May act in both early periplasmic and late outer membrane-associated steps of protein maturation. The protein is Chaperone SurA of Pseudomonas fluorescens (strain ATCC BAA-477 / NRRL B-23932 / Pf-5).